The primary structure comprises 296 residues: Putative ribose uptake protein RbsU (296 aa).

Helical transmembrane passes span asparagine 2–serine 24, isoleucine 34–valine 51, serine 58–phenylalanine 80, arginine 90–glycine 112, leucine 121–tryptophan 139, alanine 182–leucine 201, isoleucine 221–proline 240, leucine 245–leucine 267, and methionine 276–isoleucine 295.

This sequence belongs to the GRP transporter (TC 2.A.7.5) family.

Its subcellular location is the cell membrane. In terms of biological role, could be involved in the uptake of ribose. The chain is Putative ribose uptake protein RbsU (rbsU) from Lactobacillus johnsonii (strain CNCM I-12250 / La1 / NCC 533).